Here is a 128-residue protein sequence, read N- to C-terminus: Adrenodoxin (128 aa).

At Ser-3 the chain carries Phosphoserine. The residue at position 6 (Lys-6) is an N6-acetyllysine; alternate. Position 6 is an N6-succinyllysine; alternate (Lys-6). The 105-residue stretch at 7 to 111 folds into the 2Fe-2S ferredoxin-type domain; sequence VTVNFINRDG…NMTVRVPDAV (105 aa). Residues Cys-46, Cys-52, Cys-55, and Cys-92 each coordinate [2Fe-2S] cluster. Lys-98 carries the post-translational modification N6-succinyllysine. Residue Ser-117 is modified to Phosphoserine.

It belongs to the adrenodoxin/putidaredoxin family. Interacts with CYP11A1. The cofactor is [2Fe-2S] cluster.

It localises to the mitochondrion matrix. In terms of biological role, essential for the synthesis of various steroid hormones. Participates in the reduction of mitochondrial cytochrome P450 for steroidogenesis. Transfers electrons from adrenodoxin reductase to CYP11A1, a cytochrome P450 that catalyzes cholesterol side-chain cleavage. Does not form a ternary complex with adrenodoxin reductase and CYP11A1 but shuttles between the two enzymes to transfer electrons. The polypeptide is Adrenodoxin (FDX1) (Ovis aries (Sheep)).